Reading from the N-terminus, the 658-residue chain is Integrator complex subunit 9 (658 aa).

The disordered stretch occupies residues 547–586 (KDNKHVLQPPPKPVAPPGSKKRKRPAEESPETPPFKPLLS). The Nuclear localization signal motif lies at 566–570 (KKRKR).

It belongs to the metallo-beta-lactamase superfamily. RNA-metabolizing metallo-beta-lactamase-like family. INTS9 subfamily. As to quaternary structure, component of the Integrator complex, composed of core subunits INTS1, INTS2, INTS3, INTS4, INTS5, INTS6, INTS7, INTS8, INTS9/RC74, INTS10, INTS11/CPSF3L, INTS12, INTS13, INTS14 and INTS15. The core complex associates with protein phosphatase 2A subunits PPP2CA and PPP2R1A, to form the Integrator-PP2A (INTAC) complex. INTS9 is part of the RNA endonuclease subcomplex, composed of INTS4, INTS9, INTS11 and inositol hexakisphosphate (InsP6).

Its subcellular location is the nucleus. The protein resides in the cytoplasm. Functionally, component of the integrator complex, a multiprotein complex that terminates RNA polymerase II (Pol II) transcription in the promoter-proximal region of genes. The integrator complex provides a quality checkpoint during transcription elongation by driving premature transcription termination of transcripts that are unfavorably configured for transcriptional elongation: the complex terminates transcription by (1) catalyzing dephosphorylation of the C-terminal domain (CTD) of Pol II subunit POLR2A/RPB1 and SUPT5H/SPT5, (2) degrading the exiting nascent RNA transcript via endonuclease activity and (3) promoting the release of Pol II from bound DNA. The integrator complex is also involved in terminating the synthesis of non-coding Pol II transcripts, such as enhancer RNAs (eRNAs), small nuclear RNAs (snRNAs), telomerase RNAs and long non-coding RNAs (lncRNAs). This chain is Integrator complex subunit 9 (ints9), found in Xenopus laevis (African clawed frog).